Reading from the N-terminus, the 659-residue chain is WD repeat-containing protein 48 homolog (659 aa).

8 WD repeats span residues 27–66 (RHRN…SQEP), 73–112 (HHND…CMST), 115–154 (THRD…ALTA), 166–205 (GSKD…KIAK), 208–247 (GHAE…CVQT), 250–289 (VHSE…NSVL), 292–331 (EERA…KLSF), and 337–376 (KGGA…KVED). Positions 592–613 (ASTGNSNSSQNNSQSDANSEGS) are disordered. Positions 596-610 (NSNSSQNNSQSDANS) are enriched in low complexity.

It belongs to the WD repeat WDR48 family. Catalytic component of the Usp12-46 deubiquitylase complex consisting of Usp12-46, Wdr20 and Uaf1; regulatory subunit that, together wtih Wdr20, stabilizes Usp12-46. The Usp12-46 deubiquitylase complex associates with arr/arrow; the interaction leads to deubiquitination and stabilization of arr/arrow.

Regulatory component of the Usp12-46 deubiquitylase complex. activates deubiquitination by increasing the catalytic turnover without increasing the affinity of deubiquitinating enzymes for the substrate. The complex deubiquitylates the wg/wingless-signaling receptor arr/arrow, which stabilizes the receptor and increases its concentration at the cell surface; this enhances the sensitivity of cells to wg/wingless-signal stimulation. This increases the amplitude and spatial range of the signaling response to the wg/wingless morphogen gradient, facilitating the precise concentration-dependent regulation of its target genes. Together with Wdr20 and Usp12-46 required for wg/wingless-mediated signaling in the wing imaginal disc and for wg/wingless-dependent regulation of intestinal stem cell proliferation. The chain is WD repeat-containing protein 48 homolog from Aedes aegypti (Yellowfever mosquito).